Consider the following 216-residue polypeptide: Ethylene-responsive transcription factor ERF016 (216 aa).

The segment at residues 6-63 is a DNA-binding region (AP2/ERF); sequence KYTGVRKRKWGKWVAEIRLPNSRDRIWLGSFDSAEKAARAFDAALYCLRGPGARFNFP. Positions 121-145 are disordered; that stretch reads EINSGSGGPTLGQVGEDNNNEGNSN. Positions 135–145 are enriched in low complexity; the sequence is GEDNNNEGNSN.

It belongs to the AP2/ERF transcription factor family. ERF subfamily.

Its subcellular location is the nucleus. Probably acts as a transcriptional activator. Binds to the GCC-box pathogenesis-related promoter element. May be involved in the regulation of gene expression by stress factors and by components of stress signal transduction pathways. The sequence is that of Ethylene-responsive transcription factor ERF016 (ERF016) from Arabidopsis thaliana (Mouse-ear cress).